The sequence spans 229 residues: Cytidylate kinase (229 aa).

7–15 (GPAGAGKSS) provides a ligand contact to ATP.

This sequence belongs to the cytidylate kinase family. Type 1 subfamily.

It is found in the cytoplasm. It catalyses the reaction CMP + ATP = CDP + ADP. It carries out the reaction dCMP + ATP = dCDP + ADP. The chain is Cytidylate kinase from Rhodopirellula baltica (strain DSM 10527 / NCIMB 13988 / SH1).